The following is a 456-amino-acid chain: Bifunctional protein GlmU (456 aa).

A pyrophosphorylase region spans residues 1-229 (MLNSAMSVVI…ISETDGVNNR (229 aa)). Residues 11-14 (LAAG), Lys-25, Gln-76, 81-82 (GT), 103-105 (YGD), Gly-140, Glu-154, Asn-169, and Asn-227 contribute to the UDP-N-acetyl-alpha-D-glucosamine site. Asp-105 contributes to the Mg(2+) binding site. Asn-227 contributes to the Mg(2+) binding site. The interval 230–250 (LQLSRLERIYQAEQAEKLLLS) is linker. The N-acetyltransferase stretch occupies residues 251–456 (GVMLRDPARF…QGWQRPVKKK (206 aa)). UDP-N-acetyl-alpha-D-glucosamine-binding residues include Arg-333 and Lys-351. His-363 functions as the Proton acceptor in the catalytic mechanism. Tyr-366 and Asn-377 together coordinate UDP-N-acetyl-alpha-D-glucosamine. Residues Ala-380, 386–387 (NY), Ser-405, Ala-423, and Arg-440 each bind acetyl-CoA.

It in the N-terminal section; belongs to the N-acetylglucosamine-1-phosphate uridyltransferase family. In the C-terminal section; belongs to the transferase hexapeptide repeat family. As to quaternary structure, homotrimer. The cofactor is Mg(2+).

Its subcellular location is the cytoplasm. The catalysed reaction is alpha-D-glucosamine 1-phosphate + acetyl-CoA = N-acetyl-alpha-D-glucosamine 1-phosphate + CoA + H(+). It carries out the reaction N-acetyl-alpha-D-glucosamine 1-phosphate + UTP + H(+) = UDP-N-acetyl-alpha-D-glucosamine + diphosphate. The protein operates within nucleotide-sugar biosynthesis; UDP-N-acetyl-alpha-D-glucosamine biosynthesis; N-acetyl-alpha-D-glucosamine 1-phosphate from alpha-D-glucosamine 6-phosphate (route II): step 2/2. Its pathway is nucleotide-sugar biosynthesis; UDP-N-acetyl-alpha-D-glucosamine biosynthesis; UDP-N-acetyl-alpha-D-glucosamine from N-acetyl-alpha-D-glucosamine 1-phosphate: step 1/1. It functions in the pathway bacterial outer membrane biogenesis; LPS lipid A biosynthesis. In terms of biological role, catalyzes the last two sequential reactions in the de novo biosynthetic pathway for UDP-N-acetylglucosamine (UDP-GlcNAc). The C-terminal domain catalyzes the transfer of acetyl group from acetyl coenzyme A to glucosamine-1-phosphate (GlcN-1-P) to produce N-acetylglucosamine-1-phosphate (GlcNAc-1-P), which is converted into UDP-GlcNAc by the transfer of uridine 5-monophosphate (from uridine 5-triphosphate), a reaction catalyzed by the N-terminal domain. This chain is Bifunctional protein GlmU, found in Salmonella gallinarum (strain 287/91 / NCTC 13346).